A 105-amino-acid polypeptide reads, in one-letter code: Larval cuticle protein 65Ag1 (105 aa).

A signal peptide spans 1–18; it reads MKFLIVFVALFAVALAAP. The Chitin-binding type R&amp;R domain maps to 34–103; it reads PESFKYDWET…PQGAHLPVAP (70 aa).

Component of the cuticle of the larva. The chain is Larval cuticle protein 65Ag1 from Drosophila melanogaster (Fruit fly).